The sequence spans 446 residues: Phosphoglucosamine mutase (446 aa).

Serine 99 (phosphoserine intermediate) is an active-site residue. Residues serine 99, aspartate 242, aspartate 244, and aspartate 246 each contribute to the Mg(2+) site. Serine 99 is modified (phosphoserine).

This sequence belongs to the phosphohexose mutase family. Mg(2+) serves as cofactor. Activated by phosphorylation.

It carries out the reaction alpha-D-glucosamine 1-phosphate = D-glucosamine 6-phosphate. Catalyzes the conversion of glucosamine-6-phosphate to glucosamine-1-phosphate. In Campylobacter hominis (strain ATCC BAA-381 / DSM 21671 / CCUG 45161 / LMG 19568 / NCTC 13146 / CH001A), this protein is Phosphoglucosamine mutase.